Consider the following 527-residue polypeptide: Peptide chain release factor 3 (527 aa).

Residues 9–277 (AKRRTFAIIS…AVVDWAPRPL (269 aa)) enclose the tr-type G domain. GTP is bound by residues 18-25 (SHPDAGKT), 86-90 (DTPGH), and 140-143 (NKLD).

The protein belongs to the TRAFAC class translation factor GTPase superfamily. Classic translation factor GTPase family. PrfC subfamily.

It is found in the cytoplasm. In terms of biological role, increases the formation of ribosomal termination complexes and stimulates activities of RF-1 and RF-2. It binds guanine nucleotides and has strong preference for UGA stop codons. It may interact directly with the ribosome. The stimulation of RF-1 and RF-2 is significantly reduced by GTP and GDP, but not by GMP. In Pseudomonas putida (strain ATCC 47054 / DSM 6125 / CFBP 8728 / NCIMB 11950 / KT2440), this protein is Peptide chain release factor 3.